The chain runs to 192 residues: MAQAMINMMKQHPAHWAVLEGNLAQFMIHLDDADEVDPITGDTLLMAILCKDWEETRDKMVWVHMLIQKAKMMSQYINICKLNDSGRCPADALNALANEELARYIDVNILKEEFHELGLYIRGQQCSIEGLENEWVKVDRVPPITIKVPEQYKIETIITPRVPPMTIRVPAKYRMCPPLLIKVPIQYRLVRP.

This is an uncharacterized protein from Magallana gigas (Pacific oyster).